The following is a 1158-amino-acid chain: ATP-dependent helicase/deoxyribonuclease subunit B (1158 aa).

In terms of domain architecture, UvrD-like helicase ATP-binding spans 1-275 (MTLHAYLGRA…QYFNQLYRFN (275 aa)). ATP is bound at residue 8–15 (GRAGTGKS). The region spanning 269-583 (NQLYRFNNQD…SIGTMDLAKV (315 aa)) is the UvrD-like helicase C-terminal domain. Residues C784, C1112, C1115, and C1121 each coordinate [4Fe-4S] cluster.

The protein belongs to the helicase family. AddB/RexB type 1 subfamily. In terms of assembly, heterodimer of AddA and AddB. The cofactor is Mg(2+). [4Fe-4S] cluster serves as cofactor.

Its function is as follows. The heterodimer acts as both an ATP-dependent DNA helicase and an ATP-dependent, dual-direction single-stranded exonuclease. Recognizes the chi site generating a DNA molecule suitable for the initiation of homologous recombination. The AddB subunit has 5' -&gt; 3' nuclease activity but not helicase activity. This chain is ATP-dependent helicase/deoxyribonuclease subunit B, found in Staphylococcus aureus (strain MW2).